Consider the following 211-residue polypeptide: Thiamine-phosphate synthase (211 aa).

4-amino-2-methyl-5-(diphosphooxymethyl)pyrimidine-binding positions include 37–41 (QLRIK) and asparagine 69. Residues aspartate 70 and aspartate 89 each contribute to the Mg(2+) site. Serine 108 contacts 4-amino-2-methyl-5-(diphosphooxymethyl)pyrimidine. 134-136 (TQT) serves as a coordination point for 2-[(2R,5Z)-2-carboxy-4-methylthiazol-5(2H)-ylidene]ethyl phosphate. 4-amino-2-methyl-5-(diphosphooxymethyl)pyrimidine is bound at residue lysine 137. 2-[(2R,5Z)-2-carboxy-4-methylthiazol-5(2H)-ylidene]ethyl phosphate-binding positions include glycine 166 and 186–187 (VS).

It belongs to the thiamine-phosphate synthase family. It depends on Mg(2+) as a cofactor.

The catalysed reaction is 2-[(2R,5Z)-2-carboxy-4-methylthiazol-5(2H)-ylidene]ethyl phosphate + 4-amino-2-methyl-5-(diphosphooxymethyl)pyrimidine + 2 H(+) = thiamine phosphate + CO2 + diphosphate. The enzyme catalyses 2-(2-carboxy-4-methylthiazol-5-yl)ethyl phosphate + 4-amino-2-methyl-5-(diphosphooxymethyl)pyrimidine + 2 H(+) = thiamine phosphate + CO2 + diphosphate. It catalyses the reaction 4-methyl-5-(2-phosphooxyethyl)-thiazole + 4-amino-2-methyl-5-(diphosphooxymethyl)pyrimidine + H(+) = thiamine phosphate + diphosphate. Its pathway is cofactor biosynthesis; thiamine diphosphate biosynthesis; thiamine phosphate from 4-amino-2-methyl-5-diphosphomethylpyrimidine and 4-methyl-5-(2-phosphoethyl)-thiazole: step 1/1. Its function is as follows. Condenses 4-methyl-5-(beta-hydroxyethyl)thiazole monophosphate (THZ-P) and 2-methyl-4-amino-5-hydroxymethyl pyrimidine pyrophosphate (HMP-PP) to form thiamine monophosphate (TMP). In Klebsiella pneumoniae subsp. pneumoniae (strain ATCC 700721 / MGH 78578), this protein is Thiamine-phosphate synthase.